The following is a 343-amino-acid chain: 3-isopropylmalate dehydrogenase (343 aa).

Residues R94, R104, R128, and D218 each coordinate substrate. Mg(2+) contacts are provided by D218, D242, and D246. 278–290 (GSAPDIAGQNKAN) contributes to the NAD(+) binding site.

Belongs to the isocitrate and isopropylmalate dehydrogenases family. LeuB type 2 subfamily. In terms of assembly, homodimer. Mg(2+) serves as cofactor. Mn(2+) is required as a cofactor.

It is found in the cytoplasm. It catalyses the reaction (2R,3S)-3-isopropylmalate + NAD(+) = 4-methyl-2-oxopentanoate + CO2 + NADH. It functions in the pathway amino-acid biosynthesis; L-leucine biosynthesis; L-leucine from 3-methyl-2-oxobutanoate: step 3/4. In terms of biological role, catalyzes the oxidation of 3-carboxy-2-hydroxy-4-methylpentanoate (3-isopropylmalate) to 3-carboxy-4-methyl-2-oxopentanoate. The product decarboxylates to 4-methyl-2 oxopentanoate. This is 3-isopropylmalate dehydrogenase from Bifidobacterium longum (strain DJO10A).